Consider the following 268-residue polypeptide: Shikimate dehydrogenase (NADP(+)) (268 aa).

Shikimate contacts are provided by residues 13-15 and T60; that span reads SLS. Residue K64 is the Proton acceptor of the active site. E76 contacts NADP(+). 2 residues coordinate shikimate: N85 and D100. NADP(+) is bound by residues 124 to 128, 148 to 153, and I209; these read GAGGA and NRTMAR. Residue Y211 coordinates shikimate. G232 is a binding site for NADP(+).

Belongs to the shikimate dehydrogenase family. In terms of assembly, homodimer.

The catalysed reaction is shikimate + NADP(+) = 3-dehydroshikimate + NADPH + H(+). Its pathway is metabolic intermediate biosynthesis; chorismate biosynthesis; chorismate from D-erythrose 4-phosphate and phosphoenolpyruvate: step 4/7. Involved in the biosynthesis of the chorismate, which leads to the biosynthesis of aromatic amino acids. Catalyzes the reversible NADPH linked reduction of 3-dehydroshikimate (DHSA) to yield shikimate (SA). The chain is Shikimate dehydrogenase (NADP(+)) from Staphylococcus aureus (strain USA300).